The following is a 566-amino-acid chain: Solute carrier family 22 member 16 (566 aa).

Residues 20–40 (FASAFQTISCGIHYLASVFIA) traverse the membrane as a helical segment. N-linked (GlcNAc...) asparagine glycans are attached at residues asparagine 52, asparagine 60, and asparagine 112. 5 helical membrane-spanning segments follow: residues 149–169 (LIQPIFMLGVLIGAVIFGDIA), 176–196 (PIIWITSTGQFLFGIAVAFTF), 201–221 (FVIVRFLLAMVSSGYYVVVFV), 237–257 (MHVHAFFAVGVMIVSLVGFLV), and 261–281 (WIYQIILSLTTLPFVLCCWML). N-linked (GlcNAc...) asparagine glycosylation occurs at asparagine 344. 6 consecutive transmembrane segments (helical) span residues 351–371 (TITVWLIWFTGSLGYYVFALN), 381–401 (LNLFLTGAVEIPSYIVACLGM), 408–428 (NTLAPFLIISAVICGVIMLIP), 436–456 (IAMSMAGKFSIAVAFGLIYLY), 468–488 (LAVGSGSMMCRIGSVVAPFCV), and 493–513 (VWIFMPQMLVGIMAFLTGILT).

It belongs to the major facilitator (TC 2.A.1) superfamily. Organic cation transporter (TC 2.A.1.19) family.

The protein localises to the membrane. In terms of biological role, high affinity carnitine transporter. The chain is Solute carrier family 22 member 16 (slc22a16) from Xenopus laevis (African clawed frog).